A 354-amino-acid chain; its full sequence is Rhodopsin (354 aa).

The Extracellular segment spans residues 1–36 (MNGTEGENFYVPMSNKTGVVRNPFEYPQYYLADHWM). 2 N-linked (GlcNAc...) asparagine glycosylation sites follow: asparagine 2 and asparagine 15. A helical transmembrane segment spans residues 37 to 61 (FAVLAAYMFFLIITGFPVNFLTLFV). Residues 62 to 73 (TIQNKKLRQPLN) lie on the Cytoplasmic side of the membrane. A helical transmembrane segment spans residues 74-96 (YILLNLAVANLFMVFGGFTTTLI). Residues 97–110 (TSMNGYFVFGSTGC) lie on the Extracellular side of the membrane. Cysteine 110 and cysteine 187 form a disulfide bridge. A helical transmembrane segment spans residues 111-133 (NLEGFFATLGGEISLWSLVVLAI). Positions 134-136 (ERY) match the 'Ionic lock' involved in activated form stabilization motif. At 134-152 (ERYVVVCKPMSNFRFGSQH) the chain is on the cytoplasmic side. Residues 153–173 (AIAGVSLTWVMAMACAAPPLV) form a helical membrane-spanning segment. Residues 174–202 (GWSRYIPEGLQCSCGIDYYTPKPEINNVS) are Extracellular-facing. A glycan (N-linked (GlcNAc...) asparagine) is linked at asparagine 200. The chain crosses the membrane as a helical span at residues 203–224 (FVIYMFVVHFSIPLTIIFFCYG). The Cytoplasmic portion of the chain corresponds to 225–252 (RLVCTVKAAAAQQQESETTQRAEREVTR). A helical membrane pass occupies residues 253–274 (MVVIMVIGFLICWLPYASVALY). At 275-286 (IFNNQGSEFGPV) the chain is on the extracellular side. The helical transmembrane segment at 287–308 (FMTIPSFFAKSSALYNPLIYIL) threads the bilayer. At lysine 296 the chain carries N6-(retinylidene)lysine. The Cytoplasmic segment spans residues 309–354 (MNKQFRNCMITTLCCGKNPFEEEESTSASASKTEASSVSSSQVSPA). 2 S-palmitoyl cysteine lipidation sites follow: cysteine 322 and cysteine 323. The tract at residues 333 to 354 (STSASASKTEASSVSSSQVSPA) is disordered. The span at 334-354 (TSASASKTEASSVSSSQVSPA) shows a compositional bias: low complexity.

Belongs to the G-protein coupled receptor 1 family. Opsin subfamily. Phosphorylated on some or all of the serine and threonine residues present in the C-terminal region. Post-translationally, contains one covalently linked retinal chromophore.

The protein resides in the membrane. It localises to the cell projection. Its subcellular location is the cilium. It is found in the photoreceptor outer segment. Functionally, photoreceptor required for image-forming vision at low light intensity. While most salt water fish species use retinal as chromophore, most freshwater fish use 3-dehydroretinal, or a mixture of retinal and 3-dehydroretinal. Light-induced isomerization of 11-cis to all-trans retinal triggers a conformational change that activates signaling via G-proteins. Subsequent receptor phosphorylation mediates displacement of the bound G-protein alpha subunit by arrestin and terminates signaling. This is Rhodopsin (rho) from Galeus melastomus (Blackmouth catshark).